Consider the following 569-residue polypeptide: MMANKITRQAYAEMFGPTTGDRMRLADTELIIEVEKDYTIYGEEVKFGGGKVIRDGMGQGQRLSAETVDTVITNALIVDAVTGIVKADIGLKEGRIAAIGKAGNPDIQPGVTIVIGPGTEVIAGEGMIVTAGGIDSHIHFICPQQIDEALYSGVTTMIGGGTGPATGTFATTCTPGPWHIHRMLEAADAFPMNLGFLGKGNASLPEALREQVEAGVMGLKLHEDWGTTPAAIDCCLTVADEMDVQVAIHSDTLNESGFVEATLGAFKGRTIHTFHTEGAGGGHAPDIIKAAGLPNVLPSSTNPTMPYTVNTIDEHLDMLMVCHHLDPSIAEDIAFAESRIRRETIAAEDILHDLGAFSMMSSDSQAMGRVGEVIIRTWQAAHKMKLQRGALPEDSARNDNFRVKRYIAKYTINPALTHGIAHTVGSVEVGKLADLVLWKPAFFGVKPSLILKGGMIAAAAMGDPNASIPTPQPVHYRPMFGSFGKALKTSVTFISQAALNNPAIAALGLSKPLVAVSGTRTLTKADMVHNGATPEITVDPETYVVKADGVHLVCEPATELPLAQRYFLF.

The Urease domain occupies 132-569; the sequence is GGIDSHIHFI…LPLAQRYFLF (438 aa). Ni(2+) contacts are provided by H137, H139, and K220. Residue K220 is modified to N6-carboxylysine. Substrate is bound at residue H222. Ni(2+) contacts are provided by H249 and H275. Catalysis depends on H323, which acts as the Proton donor. D363 is a Ni(2+) binding site.

This sequence belongs to the metallo-dependent hydrolases superfamily. Urease alpha subunit family. As to quaternary structure, heterotrimer of UreA (gamma), UreB (beta) and UreC (alpha) subunits. Three heterotrimers associate to form the active enzyme. The cofactor is Ni cation. In terms of processing, carboxylation allows a single lysine to coordinate two nickel ions.

Its subcellular location is the cytoplasm. The catalysed reaction is urea + 2 H2O + H(+) = hydrogencarbonate + 2 NH4(+). Its pathway is nitrogen metabolism; urea degradation; CO(2) and NH(3) from urea (urease route): step 1/1. This Dechloromonas aromatica (strain RCB) protein is Urease subunit alpha.